Reading from the N-terminus, the 286-residue chain is NAD kinase (286 aa).

Asp74 (proton acceptor) is an active-site residue. Residues 74-75, 148-149, Asp178, Ala186, 189-194, and Gln244 each bind NAD(+); these read DG, ND, and TAYNLS.

This sequence belongs to the NAD kinase family. A divalent metal cation serves as cofactor.

The protein resides in the cytoplasm. The catalysed reaction is NAD(+) + ATP = ADP + NADP(+) + H(+). In terms of biological role, involved in the regulation of the intracellular balance of NAD and NADP, and is a key enzyme in the biosynthesis of NADP. Catalyzes specifically the phosphorylation on 2'-hydroxyl of the adenosine moiety of NAD to yield NADP. The protein is NAD kinase of Campylobacter jejuni (strain RM1221).